Reading from the N-terminus, the 920-residue chain is Phosphoenolpyruvate carboxylase (920 aa).

Catalysis depends on residues H138 and K583.

This sequence belongs to the PEPCase type 1 family. Mg(2+) is required as a cofactor.

It catalyses the reaction oxaloacetate + phosphate = phosphoenolpyruvate + hydrogencarbonate. Forms oxaloacetate, a four-carbon dicarboxylic acid source for the tricarboxylic acid cycle. The chain is Phosphoenolpyruvate carboxylase from Streptococcus pyogenes serotype M5 (strain Manfredo).